The following is a 36-amino-acid chain: Photosystem I reaction center subunit VIII (36 aa).

A helical transmembrane segment spans residues 5-27 (FLPSILVPLVGLVFPAIAIASLF).

This sequence belongs to the PsaI family.

The protein localises to the plastid. Its subcellular location is the chloroplast thylakoid membrane. Its function is as follows. May help in the organization of the PsaL subunit. The sequence is that of Photosystem I reaction center subunit VIII from Chaetosphaeridium globosum (Charophycean green alga).